The following is a 913-amino-acid chain: Valine--tRNA ligase (913 aa).

The short motif at 49–59 is the 'HIGH' region element; it reads PNVTGNLHLGH. The 'KMSKS' region signature appears at 544 to 548; that stretch reads KMSKS. An ATP-binding site is contributed by Lys-547. Residues 851-912 are a coiled coil; the sequence is DWVKKQQKRL…ERLEGVLAQL (62 aa).

The protein belongs to the class-I aminoacyl-tRNA synthetase family. ValS type 1 subfamily. As to quaternary structure, monomer.

The protein resides in the cytoplasm. It carries out the reaction tRNA(Val) + L-valine + ATP = L-valyl-tRNA(Val) + AMP + diphosphate. Its function is as follows. Catalyzes the attachment of valine to tRNA(Val). As ValRS can inadvertently accommodate and process structurally similar amino acids such as threonine, to avoid such errors, it has a 'posttransfer' editing activity that hydrolyzes mischarged Thr-tRNA(Val) in a tRNA-dependent manner. This Deinococcus radiodurans (strain ATCC 13939 / DSM 20539 / JCM 16871 / CCUG 27074 / LMG 4051 / NBRC 15346 / NCIMB 9279 / VKM B-1422 / R1) protein is Valine--tRNA ligase.